The chain runs to 186 residues: Elongation factor P (186 aa).

It belongs to the elongation factor P family.

It is found in the cytoplasm. The protein operates within protein biosynthesis; polypeptide chain elongation. Its function is as follows. Involved in peptide bond synthesis. Stimulates efficient translation and peptide-bond synthesis on native or reconstituted 70S ribosomes in vitro. Probably functions indirectly by altering the affinity of the ribosome for aminoacyl-tRNA, thus increasing their reactivity as acceptors for peptidyl transferase. The polypeptide is Elongation factor P (Shewanella halifaxensis (strain HAW-EB4)).